Here is a 278-residue protein sequence, read N- to C-terminus: Ribosomal RNA small subunit methyltransferase A (278 aa).

S-adenosyl-L-methionine contacts are provided by asparagine 18, leucine 20, glycine 45, glutamate 66, aspartate 89, and asparagine 110.

It belongs to the class I-like SAM-binding methyltransferase superfamily. rRNA adenine N(6)-methyltransferase family. RsmA subfamily.

Its subcellular location is the cytoplasm. The catalysed reaction is adenosine(1518)/adenosine(1519) in 16S rRNA + 4 S-adenosyl-L-methionine = N(6)-dimethyladenosine(1518)/N(6)-dimethyladenosine(1519) in 16S rRNA + 4 S-adenosyl-L-homocysteine + 4 H(+). Specifically dimethylates two adjacent adenosines (A1518 and A1519) in the loop of a conserved hairpin near the 3'-end of 16S rRNA in the 30S particle. May play a critical role in biogenesis of 30S subunits. The chain is Ribosomal RNA small subunit methyltransferase A from Cupriavidus metallidurans (strain ATCC 43123 / DSM 2839 / NBRC 102507 / CH34) (Ralstonia metallidurans).